Here is a 100-residue protein sequence, read N- to C-terminus: Glutamyl-tRNA(Gln) amidotransferase subunit C (100 aa).

It belongs to the GatC family. Heterotrimer of A, B and C subunits.

The catalysed reaction is L-glutamyl-tRNA(Gln) + L-glutamine + ATP + H2O = L-glutaminyl-tRNA(Gln) + L-glutamate + ADP + phosphate + H(+). It catalyses the reaction L-aspartyl-tRNA(Asn) + L-glutamine + ATP + H2O = L-asparaginyl-tRNA(Asn) + L-glutamate + ADP + phosphate + 2 H(+). Functionally, allows the formation of correctly charged Asn-tRNA(Asn) or Gln-tRNA(Gln) through the transamidation of misacylated Asp-tRNA(Asn) or Glu-tRNA(Gln) in organisms which lack either or both of asparaginyl-tRNA or glutaminyl-tRNA synthetases. The reaction takes place in the presence of glutamine and ATP through an activated phospho-Asp-tRNA(Asn) or phospho-Glu-tRNA(Gln). This is Glutamyl-tRNA(Gln) amidotransferase subunit C from Streptococcus pyogenes serotype M1.